The following is a 573-amino-acid chain: Proline--tRNA ligase (573 aa).

It belongs to the class-II aminoacyl-tRNA synthetase family. ProS type 1 subfamily. In terms of assembly, homodimer.

Its subcellular location is the cytoplasm. The enzyme catalyses tRNA(Pro) + L-proline + ATP = L-prolyl-tRNA(Pro) + AMP + diphosphate. Functionally, catalyzes the attachment of proline to tRNA(Pro) in a two-step reaction: proline is first activated by ATP to form Pro-AMP and then transferred to the acceptor end of tRNA(Pro). As ProRS can inadvertently accommodate and process non-cognate amino acids such as alanine and cysteine, to avoid such errors it has two additional distinct editing activities against alanine. One activity is designated as 'pretransfer' editing and involves the tRNA(Pro)-independent hydrolysis of activated Ala-AMP. The other activity is designated 'posttransfer' editing and involves deacylation of mischarged Ala-tRNA(Pro). The misacylated Cys-tRNA(Pro) is not edited by ProRS. The sequence is that of Proline--tRNA ligase from Moorella thermoacetica (strain ATCC 39073 / JCM 9320).